The primary structure comprises 237 residues: Large ribosomal subunit protein uL1 (237 aa).

It belongs to the universal ribosomal protein uL1 family. In terms of assembly, part of the 50S ribosomal subunit.

Its function is as follows. Binds directly to 23S rRNA. The L1 stalk is quite mobile in the ribosome, and is involved in E site tRNA release. Protein L1 is also a translational repressor protein, it controls the translation of the L11 operon by binding to its mRNA. The chain is Large ribosomal subunit protein uL1 from Thermosynechococcus vestitus (strain NIES-2133 / IAM M-273 / BP-1).